The primary structure comprises 182 residues: Interferon beta (182 aa).

An N-terminal signal peptide occupies residues 1-21 (MNNRWILHAAFLLCFSTTALS). Residue tyrosine 24 is modified to Phosphotyrosine. Residues asparagine 50, asparagine 90, and asparagine 97 are each glycosylated (N-linked (GlcNAc...) asparagine).

This sequence belongs to the alpha/beta interferon family. In terms of assembly, monomer. In terms of processing, this beta interferon does not have a disulfide bond.

It localises to the secreted. Functionally, type I interferon cytokine that plays a key role in the innate immune response to infection, developing tumors and other inflammatory stimuli. Signals via binding to high-affinity (IFNAR2) and low-affinity (IFNAR1) heterodimeric receptor, activating the canonical Jak-STAT signaling pathway resulting in transcriptional activation or repression of interferon-regulated genes that encode the effectors of the interferon response, such as antiviral proteins, regulators of cell proliferation and differentiation, and immunoregulatory proteins. Signals mostly via binding to a IFNAR1-IFNAR2 heterodimeric receptor, but can also function with IFNAR1 alone and independently of Jak-STAT pathways. Elicits a wide variety of responses, including antiviral and antibacterial activities, and can regulate the development of B-cells, myelopoiesis and lipopolysaccharide (LPS)-inducible production of tumor necrosis factor. Plays a role in neuronal homeostasis by regulating dopamine turnover and protecting dopaminergic neurons: acts by promoting neuronal autophagy and alpha-synuclein clearance, thereby preventing dopaminergic neuron loss. IFNB1 is more potent than interferon-alpha (IFN-alpha) in inducing the apoptotic and antiproliferative pathways required for control of tumor cell growth. This chain is Interferon beta, found in Mus musculus (Mouse).